The primary structure comprises 555 residues: Oxamate carbamoyltransferase subunit AllF (555 aa).

This sequence belongs to the AllF family. As to quaternary structure, the OXTCase is composed of 3 subunits, AllF, AllG and AllH. The cofactor is Mg(2+).

The catalysed reaction is oxamate + carbamoyl phosphate = N-carbamoyl-2-oxoglycine + phosphate. Its pathway is nitrogen metabolism; (S)-allantoin degradation. Functionally, component of a carbamoyltransferase involved in the anaerobic nitrogen utilization via the assimilation of allantoin. Catalyzes the conversion of oxalurate (N-carbamoyl-2-oxoglycine) to oxamate and carbamoyl phosphate. The protein is Oxamate carbamoyltransferase subunit AllF of Escherichia coli (strain K12).